Consider the following 197-residue polypeptide: Large ribosomal subunit protein bL25 (197 aa).

It belongs to the bacterial ribosomal protein bL25 family. CTC subfamily. In terms of assembly, part of the 50S ribosomal subunit; part of the 5S rRNA/L5/L18/L25 subcomplex. Contacts the 5S rRNA. Binds to the 5S rRNA independently of L5 and L18.

Its function is as follows. This is one of the proteins that binds to the 5S RNA in the ribosome where it forms part of the central protuberance. The sequence is that of Large ribosomal subunit protein bL25 from Caulobacter vibrioides (strain ATCC 19089 / CIP 103742 / CB 15) (Caulobacter crescentus).